Here is a 428-residue protein sequence, read N- to C-terminus: Glutamate-1-semialdehyde 2,1-aminomutase (428 aa).

Lys267 is modified (N6-(pyridoxal phosphate)lysine).

It belongs to the class-III pyridoxal-phosphate-dependent aminotransferase family. HemL subfamily. Homodimer. The cofactor is pyridoxal 5'-phosphate.

The protein resides in the cytoplasm. The catalysed reaction is (S)-4-amino-5-oxopentanoate = 5-aminolevulinate. The protein operates within porphyrin-containing compound metabolism; protoporphyrin-IX biosynthesis; 5-aminolevulinate from L-glutamyl-tRNA(Glu): step 2/2. The protein is Glutamate-1-semialdehyde 2,1-aminomutase of Sulfurihydrogenibium sp. (strain YO3AOP1).